The chain runs to 133 residues: Small ribosomal subunit protein uS8 (133 aa).

Belongs to the universal ribosomal protein uS8 family. Part of the 30S ribosomal subunit.

Its function is as follows. One of the primary rRNA binding proteins, it binds directly to 16S rRNA central domain where it helps coordinate assembly of the platform of the 30S subunit. In Aeropyrum pernix (strain ATCC 700893 / DSM 11879 / JCM 9820 / NBRC 100138 / K1), this protein is Small ribosomal subunit protein uS8.